The chain runs to 349 residues: Probable myosin light chain kinase DDB_G0275057 (349 aa).

Residues 1–33 (MGCFNSKEAGAGRPKTTTQQQQQATPEPTVTTA) form a disordered region. The segment covering 16–33 (TTTQQQQQATPEPTVTTA) has biased composition (low complexity). Residues 56–313 (YVVGKELGRG…AKQCLDDLWL (258 aa)) form the Protein kinase domain. ATP is bound by residues 62 to 70 (LGRGAFSVV) and K85. D178 functions as the Proton acceptor in the catalytic mechanism.

Belongs to the protein kinase superfamily. CAMK Ser/Thr protein kinase family. CaMK subfamily.

It catalyses the reaction L-seryl-[myosin light chain] + ATP = O-phospho-L-seryl-[myosin light chain] + ADP + H(+). The enzyme catalyses L-threonyl-[myosin light chain] + ATP = O-phospho-L-threonyl-[myosin light chain] + ADP + H(+). Its activity is regulated as follows. Does not have a calmodulin-binding domain. Its function is as follows. May phosphorylate a specific serine in the N-terminus of a myosin light chain. The polypeptide is Probable myosin light chain kinase DDB_G0275057 (Dictyostelium discoideum (Social amoeba)).